A 284-amino-acid chain; its full sequence is F-box protein PP2-B13 (284 aa).

An F-box domain is found at 1 to 44 (MMMLPEACVANILAFTSPADAFSSSEVSSVFRLAGDSDFVWEKF).

The polypeptide is F-box protein PP2-B13 (PP2B13) (Arabidopsis thaliana (Mouse-ear cress)).